The primary structure comprises 60 residues: Small, acid-soluble spore protein H 2 (60 aa).

The segment at 38–60 (TIHPLDNPSQKQSVPVASLEEHS) is disordered.

It belongs to the SspH family.

Its subcellular location is the spore core. This chain is Small, acid-soluble spore protein H 2, found in Geobacillus thermodenitrificans (strain NG80-2).